The chain runs to 1295 residues: Phosphoribosylformylglycinamidine synthase (1295 aa).

The tract at residues 305–327 is disordered; it reads WPGAATGSGGEIRDEGATGRGAK. ATP contacts are provided by residues 307-318 and Ala-678; that span reads GAATGSGGEIRD. 3 residues coordinate Mg(2+): Glu-718, Asn-722, and Asp-884. Ser-886 contacts ATP. In terms of domain architecture, Glutamine amidotransferase type-1 spans 1042-1295; that stretch reads VAVLREQGVN…IFRNARKQLG (254 aa). Cys-1135 serves as the catalytic Nucleophile. Active-site residues include His-1260 and Glu-1262.

The protein in the N-terminal section; belongs to the FGAMS family. Monomer. Both N-terminus methionine truncation and retention have been observed for this protein.

It localises to the cytoplasm. It carries out the reaction N(2)-formyl-N(1)-(5-phospho-beta-D-ribosyl)glycinamide + L-glutamine + ATP + H2O = 2-formamido-N(1)-(5-O-phospho-beta-D-ribosyl)acetamidine + L-glutamate + ADP + phosphate + H(+). It participates in purine metabolism; IMP biosynthesis via de novo pathway; 5-amino-1-(5-phospho-D-ribosyl)imidazole from N(2)-formyl-N(1)-(5-phospho-D-ribosyl)glycinamide: step 1/2. Phosphoribosylformylglycinamidine synthase involved in the purines biosynthetic pathway. Catalyzes the ATP-dependent conversion of formylglycinamide ribonucleotide (FGAR) and glutamine to yield formylglycinamidine ribonucleotide (FGAM) and glutamate. This Escherichia coli (strain K12) protein is Phosphoribosylformylglycinamidine synthase.